A 330-amino-acid chain; its full sequence is Phenylalanine--tRNA ligase alpha subunit (330 aa).

Glu246 is a Mg(2+) binding site.

Belongs to the class-II aminoacyl-tRNA synthetase family. Phe-tRNA synthetase alpha subunit type 1 subfamily. As to quaternary structure, tetramer of two alpha and two beta subunits. Mg(2+) is required as a cofactor.

The protein resides in the cytoplasm. It carries out the reaction tRNA(Phe) + L-phenylalanine + ATP = L-phenylalanyl-tRNA(Phe) + AMP + diphosphate + H(+). This Campylobacter jejuni subsp. doylei (strain ATCC BAA-1458 / RM4099 / 269.97) protein is Phenylalanine--tRNA ligase alpha subunit.